Here is a 334-residue protein sequence, read N- to C-terminus: Desumoylating isopeptidase 1 homolog (334 aa).

The 145-residue stretch at 30–174 (TVVRLNVYDM…FLEKCIPQEW (145 aa)) folds into the PPPDE domain. Active-site residues include histidine 55 and cysteine 133. Residues 310 to 325 (SNIGKTNSTPGTTSNG) show a composition bias toward polar residues. The segment at 310-334 (SNIGKTNSTPGTTSNGLAKPTCSEC) is disordered.

It belongs to the DeSI family. As to expression, expressed in the pharynx, hypodermis, intestine, head neuron and tail neuron.

Its subcellular location is the cytoplasm. The protein resides in the nucleus. Functionally, protease which deconjugates SUMO from some substrate proteins. Has isopeptidase but not SUMO-processing activity. Collaborates with ubql-1 in the export of ubiquitinated proteins from the nucleus to the cytoplasm. The chain is Desumoylating isopeptidase 1 homolog from Caenorhabditis elegans.